Here is a 638-residue protein sequence, read N- to C-terminus: Growth hormone receptor (638 aa).

The N-terminal stretch at 1–18 (MDLWQLLLTLALAGSSDA) is a signal peptide. Residues 19–264 (FSGSEPTAAI…NQFTCEEDFY (246 aa)) are Extracellular-facing. The N-linked (GlcNAc...) asparagine glycan is linked to asparagine 46. Intrachain disulfides connect cysteine 56–cysteine 66 and cysteine 101–cysteine 112. Asparagine 115 carries an N-linked (GlcNAc...) asparagine glycan. Cysteine 126 and cysteine 140 form a disulfide bridge. In terms of domain architecture, Fibronectin type-III spans 151–254 (PPIALNWTLL…EVLYVTLPQM (104 aa)). N-linked (GlcNAc...) asparagine glycans are attached at residues asparagine 156, asparagine 161, and asparagine 200. The WSXWS motif motif lies at 240–244 (YGEFS). A helical membrane pass occupies residues 265-288 (FPWLLIIIFGIFGLTVMLFVFLFS). The Cytoplasmic portion of the chain corresponds to 289–638 (KQQRIKMLIL…STDQLNKIMP (350 aa)). A required for JAK2 binding region spans residues 294-379 (KMLILPPVPV…HQKSHSNLGV (86 aa)). Residues 297–305 (ILPPVPVPK) carry the Box 1 motif motif. The UbE motif signature appears at 340-349 (DSWVEFIELD). Serine 341 bears the Phosphoserine mark. The tract at residues 353 to 388 (PDEKNEGSDTDRLLSSDHQKSHSNLGVKDGDSGRTS) is disordered. Over residues 356-372 (KNEGSDTDRLLSSDHQK) the composition is skewed to basic and acidic residues. A phosphotyrosine mark is found at tyrosine 487 and tyrosine 595.

Belongs to the type I cytokine receptor family. Type 1 subfamily. In terms of assembly, on growth hormone (GH) binding, forms homodimers and binds JAK2 via a box 1-containing domain. Post-translationally, the soluble form (GHBP) is produced by phorbol ester-promoted proteolytic cleavage at the cell surface (shedding) by ADAM17/TACE. Shedding is inhibited by growth hormone (GH) binding to the receptor probably due to a conformational change in GHR rendering the receptor inaccessible to ADAM17. On GH binding, phosphorylated on tyrosine residues in the cytoplasmic domain by JAK2. In terms of processing, ubiquitinated by the ECS(SOCS2) complex following ligand-binding and phosphorylation by JAK2, leading to its degradation by the proteasome. Regulation by the ECS(SOCS2) complex acts as a negative feedback loop of growth hormone receptor signaling. Ubiquitination is not sufficient for GHR internalization.

The protein localises to the cell membrane. It localises to the secreted. Its function is as follows. Receptor for pituitary gland growth hormone (GH1) involved in regulating postnatal body growth. On ligand binding, couples to the JAK2/STAT5 pathway. In terms of biological role, the soluble form (GHBP) acts as a reservoir of growth hormone in plasma and may be a modulator/inhibitor of GH signaling. This is Growth hormone receptor (GHR) from Macaca mulatta (Rhesus macaque).